A 104-amino-acid chain; its full sequence is uncharacterized protein (104 aa).

A signal peptide spans 1 to 25 (MVSSFFMASTLLAISSCFNSSISRA). Residues 79-99 (IPVVIVVEISSTLVLLLSAFL) traverse the membrane as a helical segment.

Its subcellular location is the membrane. This is an uncharacterized protein from Saccharomyces cerevisiae (strain ATCC 204508 / S288c) (Baker's yeast).